The primary structure comprises 471 residues: Ribulose bisphosphate carboxylase large chain (471 aa).

The substrate site is built by Asn115 and Thr165. The active-site Proton acceptor is Lys167. Lys169 lines the substrate pocket. Mg(2+) is bound by residues Lys193, Asp195, and Glu196. Position 193 is an N6-carboxylysine (Lys193). His286 (proton acceptor) is an active-site residue. Substrate-binding residues include Arg287, His319, and Ser371.

Belongs to the RuBisCO large chain family. Type I subfamily. In terms of assembly, heterohexadecamer of 8 large chains and 8 small chains. Requires Mg(2+) as cofactor.

It is found in the carboxysome. The enzyme catalyses 2 (2R)-3-phosphoglycerate + 2 H(+) = D-ribulose 1,5-bisphosphate + CO2 + H2O. It carries out the reaction D-ribulose 1,5-bisphosphate + O2 = 2-phosphoglycolate + (2R)-3-phosphoglycerate + 2 H(+). In terms of biological role, ruBisCO catalyzes two reactions: the carboxylation of D-ribulose 1,5-bisphosphate, the primary event in carbon dioxide fixation, as well as the oxidative fragmentation of the pentose substrate in the photorespiration process. Both reactions occur simultaneously and in competition at the same active site. This chain is Ribulose bisphosphate carboxylase large chain, found in Prochlorococcus marinus (strain MIT 9301).